The sequence spans 417 residues: MLKREMNIADYDAELWQAMEQEKVRQEEHIELIASENYTSPRVMQAQGSQLTNKYAEGYPGKRYYGGCEYVDIVEQLAIDRAKELFGADYANVQPHSGSQANFAVYTALLQPGDTVLGMNLAQGGHLTHGSPVNFSGKLYNIVPYGIDESGKIDYDEMAKLAKEHKPKMIIGGFSAYSGVVDWAKMREIADSIGAYLFVDMAHVAGLIAAGVYPNPVPHAHVVTTTTHKTLAGPRGGLILAKGGDEELYKKLNSAVFPSAQGGPLMHVIAGKAVALKEAMEPEFKVYQQQVAKNAKAMVEVFLNRGYKVVSGGTENHLFLLDLVDKNLTGKEADAALGRANITVNKNSVPNDPKSPFVTSGIRIGSPAVTRRGFKEAEVKELAGWMCDVLDNINDEATIERVKAKVLDICARFPVYA.

Residues Leu121 and 125 to 127 contribute to the (6S)-5,6,7,8-tetrahydrofolate site; that span reads GHL. At Lys229 the chain carries N6-(pyridoxal phosphate)lysine. 355-357 is a binding site for (6S)-5,6,7,8-tetrahydrofolate; it reads SPF.

This sequence belongs to the SHMT family. As to quaternary structure, homodimer. The cofactor is pyridoxal 5'-phosphate.

The protein localises to the cytoplasm. It catalyses the reaction (6R)-5,10-methylene-5,6,7,8-tetrahydrofolate + glycine + H2O = (6S)-5,6,7,8-tetrahydrofolate + L-serine. The protein operates within one-carbon metabolism; tetrahydrofolate interconversion. It functions in the pathway amino-acid biosynthesis; glycine biosynthesis; glycine from L-serine: step 1/1. Catalyzes the reversible interconversion of serine and glycine with tetrahydrofolate (THF) serving as the one-carbon carrier. This reaction serves as the major source of one-carbon groups required for the biosynthesis of purines, thymidylate, methionine, and other important biomolecules. Also exhibits THF-independent aldolase activity toward beta-hydroxyamino acids, producing glycine and aldehydes, via a retro-aldol mechanism. The sequence is that of Serine hydroxymethyltransferase from Salmonella schwarzengrund (strain CVM19633).